The sequence spans 141 residues: Large ribosomal subunit protein uL11 (141 aa).

It belongs to the universal ribosomal protein uL11 family. In terms of assembly, part of the ribosomal stalk of the 50S ribosomal subunit. Interacts with L10 and the large rRNA to form the base of the stalk. L10 forms an elongated spine to which L12 dimers bind in a sequential fashion forming a multimeric L10(L12)X complex. One or more lysine residues are methylated.

In terms of biological role, forms part of the ribosomal stalk which helps the ribosome interact with GTP-bound translation factors. The polypeptide is Large ribosomal subunit protein uL11 (Pelodictyon phaeoclathratiforme (strain DSM 5477 / BU-1)).